The following is a 282-amino-acid chain: Acetyl-coenzyme A carboxylase carboxyl transferase subunit beta (282 aa).

In terms of domain architecture, CoA carboxyltransferase N-terminal spans 29-282 (LWRTCPKCQR…LMKYGGKQND (254 aa)). Cys-33, Cys-36, Cys-51, and Cys-54 together coordinate Zn(2+). The segment at 33 to 54 (CPKCQRTLFAAQMDEYATCPGC) adopts a C4-type zinc-finger fold.

This sequence belongs to the AccD/PCCB family. As to quaternary structure, acetyl-CoA carboxylase is a heterohexamer composed of biotin carboxyl carrier protein (AccB), biotin carboxylase (AccC) and two subunits each of ACCase subunit alpha (AccA) and ACCase subunit beta (AccD). Requires Zn(2+) as cofactor.

It is found in the cytoplasm. It carries out the reaction N(6)-carboxybiotinyl-L-lysyl-[protein] + acetyl-CoA = N(6)-biotinyl-L-lysyl-[protein] + malonyl-CoA. It participates in lipid metabolism; malonyl-CoA biosynthesis; malonyl-CoA from acetyl-CoA: step 1/1. Its function is as follows. Component of the acetyl coenzyme A carboxylase (ACC) complex. Biotin carboxylase (BC) catalyzes the carboxylation of biotin on its carrier protein (BCCP) and then the CO(2) group is transferred by the transcarboxylase to acetyl-CoA to form malonyl-CoA. The protein is Acetyl-coenzyme A carboxylase carboxyl transferase subunit beta of Limosilactobacillus fermentum (strain NBRC 3956 / LMG 18251) (Lactobacillus fermentum).